Here is a 74-residue protein sequence, read N- to C-terminus: WAP four-disulfide core domain protein 18 (74 aa).

An N-terminal signal peptide occupies residues 1–24 (MKTATVFVLVALIFMTMTTAWALS). Residues 26–73 (PKEKPGACPKPPPRSFGTCDERCTGDGSCSGNMKCCSNGCGHACKPPV) form the WAP domain.

The protein resides in the secreted. Its function is as follows. Could have proteinase inhibiting capacity. In Bos taurus (Bovine), this protein is WAP four-disulfide core domain protein 18 (WFDC18).